Here is a 597-residue protein sequence, read N- to C-terminus: Aspartate--tRNA(Asp/Asn) ligase (597 aa).

Glu172 serves as a coordination point for L-aspartate. The tract at residues 196 to 199 is aspartate; the sequence is QLFK. Arg218 contacts L-aspartate. ATP-binding positions include 218-220 and Gln227; that span reads RDE. His454 contacts L-aspartate. Position 488 (Glu488) interacts with ATP. Arg495 contributes to the L-aspartate binding site. 540–543 is an ATP binding site; the sequence is GLDR.

It belongs to the class-II aminoacyl-tRNA synthetase family. Type 1 subfamily. As to quaternary structure, homodimer.

The protein resides in the cytoplasm. The catalysed reaction is tRNA(Asx) + L-aspartate + ATP = L-aspartyl-tRNA(Asx) + AMP + diphosphate. Functionally, aspartyl-tRNA synthetase with relaxed tRNA specificity since it is able to aspartylate not only its cognate tRNA(Asp) but also tRNA(Asn). Reaction proceeds in two steps: L-aspartate is first activated by ATP to form Asp-AMP and then transferred to the acceptor end of tRNA(Asp/Asn). The chain is Aspartate--tRNA(Asp/Asn) ligase from Chromobacterium violaceum (strain ATCC 12472 / DSM 30191 / JCM 1249 / CCUG 213 / NBRC 12614 / NCIMB 9131 / NCTC 9757 / MK).